Consider the following 428-residue polypeptide: Stromal membrane-associated protein 2 (428 aa).

In terms of domain architecture, Arf-GAP spans 13–139 (QAVLGSLLSE…INTFRKEKDD (127 aa)). The C4-type zinc finger occupies 28–51 (CADCQAKGPRWASWNIGVFICIRC). Residues 161-172 (VKMPQKKEETQQ) show a composition bias toward basic and acidic residues. Disordered regions lie at residues 161–182 (VKMP…KSTE) and 222–258 (SRKV…AGKK).

As to quaternary structure, may interact with clathrin heavy chains.

GTPase activating protein. May play a role in clathrin-dependent retrograde transport from early endosomes to the trans-Golgi network. This chain is Stromal membrane-associated protein 2 (SMAP2), found in Gallus gallus (Chicken).